Here is a 217-residue protein sequence, read N- to C-terminus: Magnetosome protein MamA (217 aa).

TPR repeat units lie at residues 12-44, 46-79, 80-113, 114-147, 148-181, and 182-215; these read VTLY…NDDI, QVYY…DAFD, VDVA…APDN, VKVA…NPIN, FNVR…RPNE, and GKVH…DEGA. The N-terminal domain (NTD) stretch occupies residues 41–112; it reads NDDIRQVYYR…LERSLADAPD (72 aa). The segment at 113–217 is C-terminal domain (CTD); that stretch reads NVKVATVLGL…ANELDEGASV (105 aa).

The protein belongs to the magnetosome MamA family. As to quaternary structure, oligomerizes into high molecular weight complexes (at least 560 kDa). Forms round, 20 nm diameter complexes with a central cavity. Interacts with full-length Mms6. Probably binds MamC.

The protein resides in the magnetosome membrane. Its function is as follows. Probably forms a large homooligomer on which other magnetosome subunits assemble. Required for formation of functional magnetosomes from pre-existing vesicles, it has a dynamic location in the cell. This is Magnetosome protein MamA from Paramagnetospirillum magneticum (strain ATCC 700264 / AMB-1) (Magnetospirillum magneticum).